Here is a 485-residue protein sequence, read N- to C-terminus: Membrane-bound lytic murein transglycosylase F (485 aa).

An N-terminal signal peptide occupies residues methionine 1–glutamate 29. The non-LT domain stretch occupies residues lysine 30–valine 267. The interval aspartate 268–methionine 485 is LT domain. Glutamate 314 is an active-site residue. The tract at residues glutamate 465–methionine 485 is disordered. The segment covering asparagine 474–methionine 485 has biased composition (basic and acidic residues).

It in the N-terminal section; belongs to the bacterial solute-binding protein 3 family. The protein in the C-terminal section; belongs to the transglycosylase Slt family.

The protein resides in the cell outer membrane. The enzyme catalyses Exolytic cleavage of the (1-&gt;4)-beta-glycosidic linkage between N-acetylmuramic acid (MurNAc) and N-acetylglucosamine (GlcNAc) residues in peptidoglycan, from either the reducing or the non-reducing ends of the peptidoglycan chains, with concomitant formation of a 1,6-anhydrobond in the MurNAc residue.. Its function is as follows. Murein-degrading enzyme that degrades murein glycan strands and insoluble, high-molecular weight murein sacculi, with the concomitant formation of a 1,6-anhydromuramoyl product. Lytic transglycosylases (LTs) play an integral role in the metabolism of the peptidoglycan (PG) sacculus. Their lytic action creates space within the PG sacculus to allow for its expansion as well as for the insertion of various structures such as secretion systems and flagella. The sequence is that of Membrane-bound lytic murein transglycosylase F from Pseudomonas putida (strain ATCC 700007 / DSM 6899 / JCM 31910 / BCRC 17059 / LMG 24140 / F1).